Here is a 374-residue protein sequence, read N- to C-terminus: Probable trehalose-phosphate phosphatase 9 (374 aa).

Belongs to the trehalose phosphatase family. A divalent metal cation is required as a cofactor.

It catalyses the reaction alpha,alpha-trehalose 6-phosphate + H2O = alpha,alpha-trehalose + phosphate. It participates in glycan biosynthesis; trehalose biosynthesis. Its function is as follows. Removes the phosphate from trehalose 6-phosphate to produce free trehalose. Trehalose accumulation in plant may improve abiotic stress tolerance. This chain is Probable trehalose-phosphate phosphatase 9 (TPP9), found in Oryza sativa subsp. japonica (Rice).